A 150-amino-acid polypeptide reads, in one-letter code: Large ribosomal subunit protein bL9 (150 aa).

It belongs to the bacterial ribosomal protein bL9 family.

Its function is as follows. Binds to the 23S rRNA. The sequence is that of Large ribosomal subunit protein bL9 from Polaromonas naphthalenivorans (strain CJ2).